The following is a 203-amino-acid chain: IMP cyclohydrolase (203 aa).

The protein belongs to the archaeal IMP cyclohydrolase family.

The catalysed reaction is IMP + H2O = 5-formamido-1-(5-phospho-D-ribosyl)imidazole-4-carboxamide. It participates in purine metabolism; IMP biosynthesis via de novo pathway; IMP from 5-formamido-1-(5-phospho-D-ribosyl)imidazole-4-carboxamide: step 1/1. In terms of biological role, catalyzes the cyclization of 5-formylamidoimidazole-4-carboxamide ribonucleotide to IMP. This Methanococcus aeolicus (strain ATCC BAA-1280 / DSM 17508 / OCM 812 / Nankai-3) protein is IMP cyclohydrolase.